The primary structure comprises 319 residues: L-lactate dehydrogenase 2 (319 aa).

Residues V16, D37, K42, Y68, and 82–83 each bind NAD(+); that span reads GA. Q85 and R91 together coordinate substrate. NAD(+) is bound by residues S104, 121-123, and S146; that span reads AAN. Residue 123-126 coordinates substrate; the sequence is NPVD. 151–154 serves as a coordination point for substrate; it reads DSAR. Catalysis depends on H178, which acts as the Proton acceptor. Y222 carries the phosphotyrosine modification. T231 is a binding site for substrate.

This sequence belongs to the LDH/MDH superfamily. LDH family. As to quaternary structure, homotetramer.

It is found in the cytoplasm. It carries out the reaction (S)-lactate + NAD(+) = pyruvate + NADH + H(+). Its pathway is fermentation; pyruvate fermentation to lactate; (S)-lactate from pyruvate: step 1/1. Its function is as follows. Catalyzes the conversion of lactate to pyruvate (Potential). Contributes to S.aureus growth during nitrosative stress in both aerobically and anaerobically cultured cells, despite playing a secondary role in this resistance mechanism. In Staphylococcus aureus (strain USA300), this protein is L-lactate dehydrogenase 2.